A 228-amino-acid chain; its full sequence is UPF0758 protein str1465 (228 aa).

Residues 103 to 225 (QIMSSQQVAR…YYSFREERED (123 aa)) form the MPN domain. Positions 174, 176, and 187 each coordinate Zn(2+). The JAMM motif signature appears at 174-187 (HNHPSGEAYPSRND).

The protein belongs to the UPF0758 family.

The chain is UPF0758 protein str1465 from Streptococcus thermophilus (strain CNRZ 1066).